We begin with the raw amino-acid sequence, 926 residues long: Tyrosine-protein phosphatase non-receptor type 4 (926 aa).

In terms of domain architecture, FERM spans 29–312; that stretch reads VVCNILLLDN…EHHTFFRLDR (284 aa). Disordered stretches follow at residues 379 to 412, 429 to 474, and 492 to 511; these read SDDRLETQSLPSRSPPGTPNHRNSSFTQEATRVR, SEDF…KKNS, and NESFDVPSSPEKSTPNGGIP. Composition is skewed to polar residues over residues 398-408 and 432-455; these read NHRNSSFTQEA and FVSQRSPSSTQANSIVLESSPSQE. Phosphoserine is present on Ser-474. The 73-residue stretch at 517–589 folds into the PDZ domain; sequence LIKMKPDENG…DQVVLFIKAS (73 aa). The Tyrosine-protein phosphatase domain maps to 655–911; the sequence is VLAQFDQLYR…RFVCEAILKV (257 aa). Residues Asp-820, 852–858, and Gln-896 contribute to the substrate site; that span reads CSAGIGR. Residue Cys-852 is the Phosphocysteine intermediate of the active site.

The protein belongs to the protein-tyrosine phosphatase family. Non-receptor class subfamily. In terms of tissue distribution, highly expressed in testis. Specifically expressed in spermatocytes and spermatids within seminiferous tubules (at protein level).

It localises to the cell membrane. Its subcellular location is the cytoplasm. The protein localises to the cytoskeleton. The enzyme catalyses O-phospho-L-tyrosyl-[protein] + H2O = L-tyrosyl-[protein] + phosphate. In terms of biological role, phosphatase that plays a role in immunity, learning, synaptic plasticity or cell homeostasis. Regulates neuronal cell homeostasis by protecting neurons against apoptosis. Negatively regulates TLR4-induced interferon beta production by dephosphorylating adapter TICAM2 and inhibiting subsequent TRAM-TRIF interaction. Dephosphorylates also the immunoreceptor tyrosine-based activation motifs/ITAMs of the TCR zeta subunit and thereby negatively regulates TCR-mediated signaling pathway. May act at junctions between the membrane and the cytoskeleton. The protein is Tyrosine-protein phosphatase non-receptor type 4 (Ptpn4) of Mus musculus (Mouse).